A 462-amino-acid chain; its full sequence is Glutamate--tRNA ligase 2 (462 aa).

A 'HIGH' region motif is present at residues 8-18 (PSPTGLLHVGG). A 'KMSKS' region motif is present at residues 227 to 231 (PLSKR). Lys230 contacts ATP.

Belongs to the class-I aminoacyl-tRNA synthetase family. Glutamate--tRNA ligase type 1 subfamily. In terms of assembly, monomer.

The protein localises to the cytoplasm. The catalysed reaction is tRNA(Glu) + L-glutamate + ATP = L-glutamyl-tRNA(Glu) + AMP + diphosphate. In terms of biological role, catalyzes the attachment of glutamate to tRNA(Glu) in a two-step reaction: glutamate is first activated by ATP to form Glu-AMP and then transferred to the acceptor end of tRNA(Glu). This is Glutamate--tRNA ligase 2 from Thermosipho melanesiensis (strain DSM 12029 / CIP 104789 / BI429).